Reading from the N-terminus, the 398-residue chain is uncharacterized protein (398 aa).

In terms of domain architecture, Radical SAM core spans 21–253 (TNFGPTNLII…WQLTSTSEPE (233 aa)). Residues cysteine 37, cysteine 41, and cysteine 44 each contribute to the [4Fe-4S] cluster site.

The protein belongs to the radical SAM superfamily. Anaerobic sulfatase-maturating enzyme family. Requires [4Fe-4S] cluster as cofactor.

This is an uncharacterized protein from Synechocystis sp. (strain ATCC 27184 / PCC 6803 / Kazusa).